Consider the following 96-residue polypeptide: Co-chaperonin GroES (96 aa).

Belongs to the GroES chaperonin family. As to quaternary structure, heptamer of 7 subunits arranged in a ring. Interacts with the chaperonin GroEL.

The protein resides in the cytoplasm. Functionally, together with the chaperonin GroEL, plays an essential role in assisting protein folding. The GroEL-GroES system forms a nano-cage that allows encapsulation of the non-native substrate proteins and provides a physical environment optimized to promote and accelerate protein folding. GroES binds to the apical surface of the GroEL ring, thereby capping the opening of the GroEL channel. The chain is Co-chaperonin GroES from Dechloromonas aromatica (strain RCB).